The following is a 1021-amino-acid chain: Sodium/potassium-transporting ATPase subunit alpha-1 (1021 aa).

Residues 1-5 (MGKGV) constitute a propeptide that is removed on maturation. Residues 1-11 (MGKGVGRDKYE) show a composition bias toward basic and acidic residues. The interval 1–36 (MGKGVGRDKYEPAAVSEHGDKKKAKKERDMDELKKE) is disordered. Over 6-85 (GRDKYEPAAV…NALTPPPTTP (80 aa)) the chain is Cytoplasmic. Lysine 9 is modified (N6-acetyllysine). Tyrosine 10 carries the post-translational modification Phosphotyrosine. Serine 16 bears the Phosphoserine; by PKC mark. Lysine 21 carries the post-translational modification N6-acetyllysine. Over residues 26–36 (KERDMDELKKE) the composition is skewed to basic and acidic residues. Serine 38 and serine 45 each carry phosphoserine. Residues 80–82 (PPP) form a phosphoinositide-3 kinase binding region. Residues 86–106 (EWVKFCRQLFGGFSMLLWIGA) form a helical membrane-spanning segment. Over 107–129 (VLCFLAYGIQAATEEEPQNDNLY) the chain is Extracellular. A helical membrane pass occupies residues 130 to 150 (LGVVLSAVVIITGCFSYYQEA). Residues 151-286 (KSSKIMESFK…GGQTPIAAEI (136 aa)) lie on the Cytoplasmic side of the membrane. Serine 226 bears the Phosphoserine mark. Phosphotyrosine is present on tyrosine 258. A helical membrane pass occupies residues 287-306 (EHFIHIITGVAVFLGVSFFI). At 307–318 (LSLILEYTWLEA) the chain is on the extracellular side. Residues 319-336 (VIFLIGIIVANVPEGLLA) traverse the membrane as a helical segment. Over 337-770 (TVTVCLTLTA…EEGRLIFDNL (434 aa)) the chain is Cytoplasmic. Catalysis depends on aspartate 374, which acts as the 4-aspartylphosphate intermediate. Serine 450 and serine 482 each carry phosphoserine. Lysine 485 provides a ligand contact to ATP. Tyrosine 540 carries the phosphotyrosine modification. The interval 594-715 (RAAVPDAVGK…QGAIVAVTGD (122 aa)) is mediates interaction with SCN7A. Phosphoserine is present on serine 666. Mg(2+)-binding residues include aspartate 715 and aspartate 719. A helical membrane pass occupies residues 771 to 790 (KKSIAYTLTSNIPEITPFLI). At 791 to 800 (FIIANIPLPL) the chain is on the extracellular side. The helical transmembrane segment at 801-821 (GTVTILCIDLGTDMVPAISLA) threads the bilayer. The Cytoplasmic segment spans residues 822–841 (YEQAESDIMKRQPRNPQTDK). The helical transmembrane segment at 842 to 864 (LVNERLISMAYGQIGMIQALGGF) threads the bilayer. Over 865 to 916 (FTYFVIMAENGFLPNHLLGIRVTWDDRWINDVEDSYGQQWTYEQRKIVEFTC) the chain is Extracellular. Residues 917 to 936 (HTAFFVSIVVVQWADLVICK) form a helical membrane-spanning segment. Topologically, residues 937-949 (TRRNSVFQQGMKN) are cytoplasmic. Serine 941 carries the post-translational modification Phosphoserine; by PKA. Residues 950-968 (KILIFGLFEETALAAFLSY) form a helical membrane-spanning segment. The Extracellular portion of the chain corresponds to 969–983 (CPGMGVALRMYPLKP). Residues 984 to 1004 (TWWFCAFPYSLLIFVYDEVRK) traverse the membrane as a helical segment. Topologically, residues 1005 to 1021 (LIIRRRPGGWVEKETYY) are cytoplasmic.

It belongs to the cation transport ATPase (P-type) (TC 3.A.3) family. Type IIC subfamily. As to quaternary structure, the sodium/potassium-transporting ATPase is composed of a catalytic alpha subunit, an auxiliary non-catalytic beta subunit and an additional regulatory subunit. Interacts with regulatory subunit FXYD1. Interacts with regulatory subunit FXYD3. Interacts with SIK1. Interacts with SLC35G1 and STIM1. Interacts with CLN3; this interaction regulates the sodium/potassium-transporting ATPase complex localization at the plasma membrane. Interacts with SCN7A; activates ATP1A1 P-type sodium:potassium-exchanging transporter activity which indirectly signals to nearby neurons to regulate sodium homeostasis. Post-translationally, phosphorylation on Tyr-10 modulates pumping activity. Phosphorylation of Ser-941 by PKA modulates the response of ATP1A1 to PKC. Dephosphorylation by protein phosphatase 2A (PP2A) following increases in intracellular sodium, leading to increase catalytic activity.

It localises to the cell membrane. The protein resides in the basolateral cell membrane. The protein localises to the sarcolemma. It is found in the cell projection. Its subcellular location is the axon. It localises to the melanosome. It catalyses the reaction K(+)(out) + Na(+)(in) + ATP + H2O = K(+)(in) + Na(+)(out) + ADP + phosphate + H(+). Its activity is regulated as follows. Specifically inhibited by cardiac glycosides such as digoxin or ouabain. In terms of biological role, this is the catalytic component of the active enzyme, which catalyzes the hydrolysis of ATP coupled with the exchange of sodium and potassium ions across the plasma membrane. This action creates the electrochemical gradient of sodium and potassium ions, providing the energy for active transport of various nutrients. Could also be part of an osmosensory signaling pathway that senses body-fluid sodium levels and controls salt intake behavior as well as voluntary water intake to regulate sodium homeostasis. This is Sodium/potassium-transporting ATPase subunit alpha-1 (ATP1A1) from Ovis aries (Sheep).